Here is a 285-residue protein sequence, read N- to C-terminus: Vesicle-associated membrane protein 725 (285 aa).

The Cytoplasmic segment spans residues 1 to 261 (MDRSVVPISL…MWFENMKIKL (261 aa)). Residues 75-179 (FVARGTVILV…SLNREFGSKL (105 aa)) enclose the Longin domain. In terms of domain architecture, v-SNARE coiled-coil homology spans 195 to 255 (KLAKVKAQVT…TKIRRKMWFE (61 aa)). Residues 262–282 (IVLGIIITLILIIILSVCGGF) form a helical; Anchor for type IV membrane protein membrane-spanning segment. At 283 to 285 (KCT) the chain is on the vesicular side.

The protein belongs to the synaptobrevin family. Expressed in flowers, leaves, stems and roots.

Its subcellular location is the cell membrane. The protein resides in the early endosome membrane. Functionally, involved in the targeting and/or fusion of transport vesicles to their target membrane. The chain is Vesicle-associated membrane protein 725 from Arabidopsis thaliana (Mouse-ear cress).